The following is a 107-amino-acid chain: Multidrug resistance protein mmr (107 aa).

4 helical membrane passes run 2-19 (TYLF…ATSL), 29-51 (LWPT…VSIS), 58-80 (VAYA…LFLG), and 84-106 (SVTK…LTGA).

The protein belongs to the drug/metabolite transporter (DMT) superfamily. Small multidrug resistance (SMR) (TC 2.A.7.1) family. Mmr subfamily.

It localises to the cell membrane. Multidrug efflux pump. Confers resistance to tetraphenylphosphonium (TPP), erythromycin, ethidium bromide, acriflavine, safranin O and pyronin Y. The sequence is that of Multidrug resistance protein mmr (mmr) from Mycolicibacterium paratuberculosis (strain ATCC BAA-968 / K-10) (Mycobacterium paratuberculosis).